Reading from the N-terminus, the 429-residue chain is Enolase (429 aa).

Glutamine 162 provides a ligand contact to (2R)-2-phosphoglycerate. Glutamate 204 functions as the Proton donor in the catalytic mechanism. Residues aspartate 241, glutamate 286, and aspartate 313 each coordinate Mg(2+). (2R)-2-phosphoglycerate contacts are provided by lysine 338, arginine 367, serine 368, and lysine 389. Lysine 338 (proton acceptor) is an active-site residue.

The protein belongs to the enolase family. Mg(2+) serves as cofactor.

The protein localises to the cytoplasm. It is found in the secreted. It localises to the cell surface. It catalyses the reaction (2R)-2-phosphoglycerate = phosphoenolpyruvate + H2O. It participates in carbohydrate degradation; glycolysis; pyruvate from D-glyceraldehyde 3-phosphate: step 4/5. In terms of biological role, catalyzes the reversible conversion of 2-phosphoglycerate (2-PG) into phosphoenolpyruvate (PEP). It is essential for the degradation of carbohydrates via glycolysis. This chain is Enolase, found in Shouchella clausii (strain KSM-K16) (Alkalihalobacillus clausii).